The following is a 92-amino-acid chain: RNA-binding protein Hfq (92 aa).

A Sm domain is found at 9 to 68; that stretch reads DPFLNALRRERVPVSVYLVNGIKLQGTIESFDQFVVLLRNTVSQMVYKHAISTVVPARNV.

It belongs to the Hfq family. In terms of assembly, homohexamer.

Functionally, RNA chaperone that binds small regulatory RNA (sRNAs) and mRNAs to facilitate mRNA translational regulation in response to envelope stress, environmental stress and changes in metabolite concentrations. Also binds with high specificity to tRNAs. The chain is RNA-binding protein Hfq from Xylella fastidiosa (strain M12).